The primary structure comprises 138 residues: Phospholipase A2 homolog (138 aa).

Positions Met1 to Gly16 are cleaved as a signal peptide. Intrachain disulfides connect Cys42/Cys131, Cys44/Cys60, Cys59/Cys111, Cys65/Cys138, Cys66/Cys104, Cys73/Cys97, and Cys91/Cys102. The tract at residues Lys121–Gly133 is important for membrane-damaging activities in eukaryotes and bacteria; heparin-binding.

This sequence belongs to the phospholipase A2 family. Group II subfamily. S49 sub-subfamily. Monomer. Expressed by the venom gland.

It is found in the secreted. In terms of biological role, snake venom phospholipase A2 homolog that lacks enzymatic activity. Shows high myotoxin activities and displays edema-inducing activities. Has cytotoxic activities against HUVEC cells (LC(50)=5.0 uL) and human lung adenocarcinoma A549 cells (LC(50)=5.2 uL). This is Phospholipase A2 homolog from Echis ocellatus (Ocellated saw-scaled viper).